The primary structure comprises 1282 residues: ATP-dependent helicase/nuclease subunit A (1282 aa).

A UvrD-like helicase ATP-binding domain is found at 10–481; it reads SKWTDSQRQV…IELQENFRSS (472 aa). 31–38 contacts ATP; the sequence is AGAGAGKT. The 305-residue stretch at 516-820 folds into the UvrD-like helicase C-terminal domain; that stretch reads KPRELYLNED…RLMSIHKSKG (305 aa).

The protein belongs to the helicase family. AddA subfamily. Heterodimer of AddA and AddB/RexB. The cofactor is Mg(2+).

It carries out the reaction Couples ATP hydrolysis with the unwinding of duplex DNA by translocating in the 3'-5' direction.. It catalyses the reaction ATP + H2O = ADP + phosphate + H(+). Functionally, the heterodimer acts as both an ATP-dependent DNA helicase and an ATP-dependent, dual-direction single-stranded exonuclease. Recognizes the chi site generating a DNA molecule suitable for the initiation of homologous recombination. The AddA nuclease domain is required for chi fragment generation; this subunit has the helicase and 3' -&gt; 5' nuclease activities. The sequence is that of ATP-dependent helicase/nuclease subunit A from Natranaerobius thermophilus (strain ATCC BAA-1301 / DSM 18059 / JW/NM-WN-LF).